Here is a 342-residue protein sequence, read N- to C-terminus: N-acetyl-gamma-glutamyl-phosphate reductase (342 aa).

Cys149 is an active-site residue.

This sequence belongs to the NAGSA dehydrogenase family. Type 1 subfamily.

The protein resides in the cytoplasm. It carries out the reaction N-acetyl-L-glutamate 5-semialdehyde + phosphate + NADP(+) = N-acetyl-L-glutamyl 5-phosphate + NADPH + H(+). Its pathway is amino-acid biosynthesis; L-arginine biosynthesis; N(2)-acetyl-L-ornithine from L-glutamate: step 3/4. Its function is as follows. Catalyzes the NADPH-dependent reduction of N-acetyl-5-glutamyl phosphate to yield N-acetyl-L-glutamate 5-semialdehyde. In Laribacter hongkongensis (strain HLHK9), this protein is N-acetyl-gamma-glutamyl-phosphate reductase.